The chain runs to 410 residues: Histidine--tRNA ligase (410 aa).

Belongs to the class-II aminoacyl-tRNA synthetase family.

It localises to the cytoplasm. The enzyme catalyses tRNA(His) + L-histidine + ATP = L-histidyl-tRNA(His) + AMP + diphosphate + H(+). This chain is Histidine--tRNA ligase, found in Methanoregula boonei (strain DSM 21154 / JCM 14090 / 6A8).